A 344-amino-acid chain; its full sequence is N,N-dimethyltransferase OxyT (344 aa).

S-adenosyl-L-methionine-binding positions include Asp-205 and Gly-231 to Phe-233.

This sequence belongs to the class I-like SAM-binding methyltransferase superfamily. Cation-independent O-methyltransferase family.

It catalyses the reaction 4-amino-4-dedimethylamino-anhydrotetracycline + S-adenosyl-L-methionine = 4-methylamino-4-dedimethylamino-anhydrotetracycline + S-adenosyl-L-homocysteine + H(+). The enzyme catalyses 4-methylamino-4-dedimethylamino-anhydrotetracycline + S-adenosyl-L-methionine = anhydrotetracycline + S-adenosyl-L-homocysteine + H(+). The protein operates within antibiotic biosynthesis; oxytetracycline biosynthesis. In terms of biological role, involved in the biosynthesis of the tetracycline antibiotic, oxytetracycline. Catalyzes the dimethylation of 4-amino-4-de(dimethylamino)anhydrotetracycline (4-amino-ATC) to yield anhydrotetracycline (ATC). Also able to catalyze the dimethylation of 7-chloro-, 6-demethyl-, 2-decarboxamido-2-nitrile-, and 4-methylamino-derivatives of 4-amino-4-de(dimethylamino)anhydrotetracycline. The chain is N,N-dimethyltransferase OxyT from Streptomyces rimosus.